The chain runs to 313 residues: Monoglyceride lipase (313 aa).

The GXSXG motif lies at 121-125 (GHSMG). The active-site Nucleophile is the Ser123. Catalysis depends on charge relay system residues Asp251 and His281.

It belongs to the AB hydrolase superfamily. Monoacylglycerol lipase family.

The protein resides in the lipid droplet. The protein localises to the cytoplasm. It is found in the endoplasmic reticulum. It localises to the mitochondrion outer membrane. The enzyme catalyses Hydrolyzes glycerol monoesters of long-chain fatty acids.. The catalysed reaction is a fatty acid ethyl ester + H2O = ethanol + a fatty acid + H(+). It catalyses the reaction 1-(9Z-octadecenoyl)-glycerol + H2O = glycerol + (9Z)-octadecenoate + H(+). It carries out the reaction 2-(9Z-octadecenoyl)-glycerol + H2O = glycerol + (9Z)-octadecenoate + H(+). The enzyme catalyses 1-hexadecanoylglycerol + H2O = glycerol + hexadecanoate + H(+). The catalysed reaction is 2-hexadecanoylglycerol + H2O = glycerol + hexadecanoate + H(+). It catalyses the reaction ethyl hexadecanoate + H2O = ethanol + hexadecanoate + H(+). It carries out the reaction ethyl (9Z)-octadecenoate + H2O = ethanol + (9Z)-octadecenoate + H(+). The enzyme catalyses ethyl (9Z)-hexadecenoate + H2O = (9Z)-hexadecenoate + ethanol + H(+). The catalysed reaction is ethyl octadecanoate + H2O = ethanol + octadecanoate + H(+). It functions in the pathway glycerolipid metabolism; triacylglycerol degradation. Functionally, converts monoacylglycerides (MAG) to free fatty acids and glycerol. Has a strong preference for monounsaturated monoglycerides. Required for efficient degradation of MAG, short-lived intermediates of glycerolipid metabolism which may also function as lipid signaling molecules. Controls inactivation of the signaling lipid N-palmitoylethanolamine (PEA). Involved in fatty acid ethyl ester (FAEE) catabolism. FAEEs are non-oxidative metabolites of ethanol that are transiently incorporated into lipid droplets (LDs). Their mobilization by LD-resident FAEE hydrolases facilitates a controlled metabolism of these potentially toxic lipid metabolites. This Saccharomyces cerevisiae (strain ATCC 204508 / S288c) (Baker's yeast) protein is Monoglyceride lipase (YJU3).